The following is a 363-amino-acid chain: 3-dehydroquinate synthase (363 aa).

NAD(+)-binding positions include 72 to 77, 130 to 131, Lys142, and Lys151; these read SGEKEK and TT. 3 residues coordinate Zn(2+): Glu184, His247, and His264.

It belongs to the sugar phosphate cyclases superfamily. Dehydroquinate synthase family. It depends on Co(2+) as a cofactor. Requires Zn(2+) as cofactor. NAD(+) is required as a cofactor.

Its subcellular location is the cytoplasm. The catalysed reaction is 7-phospho-2-dehydro-3-deoxy-D-arabino-heptonate = 3-dehydroquinate + phosphate. It functions in the pathway metabolic intermediate biosynthesis; chorismate biosynthesis; chorismate from D-erythrose 4-phosphate and phosphoenolpyruvate: step 2/7. Its function is as follows. Catalyzes the conversion of 3-deoxy-D-arabino-heptulosonate 7-phosphate (DAHP) to dehydroquinate (DHQ). The sequence is that of 3-dehydroquinate synthase from Bacillus anthracis (strain A0248).